The sequence spans 181 residues: Adenine phosphoribosyltransferase (181 aa).

Belongs to the purine/pyrimidine phosphoribosyltransferase family. As to quaternary structure, homodimer.

Its subcellular location is the cytoplasm. It catalyses the reaction AMP + diphosphate = 5-phospho-alpha-D-ribose 1-diphosphate + adenine. It participates in purine metabolism; AMP biosynthesis via salvage pathway; AMP from adenine: step 1/1. In terms of biological role, catalyzes a salvage reaction resulting in the formation of AMP, that is energically less costly than de novo synthesis. The protein is Adenine phosphoribosyltransferase of Brucella abortus (strain S19).